We begin with the raw amino-acid sequence, 312 residues long: tRNA pseudouridine synthase B (312 aa).

The Nucleophile role is filled by Asp-49.

Belongs to the pseudouridine synthase TruB family. Type 1 subfamily.

The enzyme catalyses uridine(55) in tRNA = pseudouridine(55) in tRNA. Its function is as follows. Responsible for synthesis of pseudouridine from uracil-55 in the psi GC loop of transfer RNAs. This chain is tRNA pseudouridine synthase B, found in Chelativorans sp. (strain BNC1).